A 201-amino-acid polypeptide reads, in one-letter code: Large ribosomal subunit protein uL4 (201 aa).

Residues 44–71 (RAQKTRAEVTGSGKKPWRQKGTGRARSG) are disordered.

The protein belongs to the universal ribosomal protein uL4 family. In terms of assembly, part of the 50S ribosomal subunit.

In terms of biological role, one of the primary rRNA binding proteins, this protein initially binds near the 5'-end of the 23S rRNA. It is important during the early stages of 50S assembly. It makes multiple contacts with different domains of the 23S rRNA in the assembled 50S subunit and ribosome. Functionally, forms part of the polypeptide exit tunnel. The protein is Large ribosomal subunit protein uL4 of Enterobacter sp. (strain 638).